The sequence spans 215 residues: Cytochrome b6 (215 aa).

A helical membrane pass occupies residues 32-52; it reads IFYCLGGITLTCFLVQVATGF. Cys35 contributes to the heme c binding site. Positions 86 and 100 each coordinate heme b. The next 3 helical transmembrane spans lie at 90–110, 116–136, and 186–206; these read ASMM…TGGF, LTWV…VTGY, and LHTF…FPMI. His187 and His202 together coordinate heme b.

The protein belongs to the cytochrome b family. PetB subfamily. As to quaternary structure, the 4 large subunits of the cytochrome b6-f complex are cytochrome b6, subunit IV (17 kDa polypeptide, PetD), cytochrome f and the Rieske protein, while the 4 small subunits are PetG, PetL, PetM and PetN. The complex functions as a dimer. It depends on heme b as a cofactor. Heme c serves as cofactor.

Its subcellular location is the plastid. It localises to the chloroplast thylakoid membrane. Its function is as follows. Component of the cytochrome b6-f complex, which mediates electron transfer between photosystem II (PSII) and photosystem I (PSI), cyclic electron flow around PSI, and state transitions. The protein is Cytochrome b6 of Daucus carota (Wild carrot).